The primary structure comprises 527 residues: MRLAFWLYEGTALHGISRITNSMKGVHTVYHAPQGDDYITATYTMLERTPEFPALSISVVRGRDLAQGVSRLPATLQQVEHHYHPELTVIAPSCSTALLQEDLRQLAAHSGVAQEKLMVYAVNPFRVTENEAADGLFTELVKRYAANGQKSAVPAVNLLGFTSLGFHLKANLTSLRRMLSTLGVKVNVVAPWGAGIADLARLPEAWLNIAPYHEIGRTAAEYLEQEFAMPAVYDTPIGVEPTLRWLRSIIEKLNEVGAGCGASPISMPALHDFSLDGMSAPSGVPWFARTADMESFSNKKAFVFADATTTVAMVKFLRDELGMKVVGAGTYLERDADWVRRELEGYLPGELMVTDRFQDVAKVIEDELPDLVCGTQMERHSCRKLDIPCMVVSPPTHIENHLLGYYPFFGFDGADVIADRVYLSCKLGLEKHLIDFFGDAGLEYEDGDAADETGVAAAAANGHSPAGGSTEGEGGMVWTGEAETMLKKVPFFVRKKVRKNTETFAMEQGEGEVTVEVFRRAKDSLGG.

Residue aspartate 36 participates in [4Fe-4S] cluster binding. Residue aspartate 292 is the Proton donor of the active site. Residue 428–429 (GL) coordinates substrate.

It belongs to the ChlB/BchB/BchZ family. As to quaternary structure, protochlorophyllide reductase is composed of three subunits; BchL, BchN and BchB. Forms a heterotetramer of two BchB and two BchN subunits. [4Fe-4S] cluster serves as cofactor.

It carries out the reaction chlorophyllide a + oxidized 2[4Fe-4S]-[ferredoxin] + 2 ADP + 2 phosphate = protochlorophyllide a + reduced 2[4Fe-4S]-[ferredoxin] + 2 ATP + 2 H2O. The protein operates within porphyrin-containing compound metabolism; bacteriochlorophyll biosynthesis (light-independent). In terms of biological role, component of the dark-operative protochlorophyllide reductase (DPOR) that uses Mg-ATP and reduced ferredoxin to reduce ring D of protochlorophyllide (Pchlide) to form chlorophyllide a (Chlide). This reaction is light-independent. The NB-protein (BchN-BchB) is the catalytic component of the complex. This is Light-independent protochlorophyllide reductase subunit B from Chlorobium phaeovibrioides (strain DSM 265 / 1930) (Prosthecochloris vibrioformis (strain DSM 265)).